A 912-amino-acid polypeptide reads, in one-letter code: Accessory gland protein Acp36DE (912 aa).

A signal peptide spans 1-23 (MWTLTCQQFIALILLGTLVPSES). Composition is skewed to low complexity over residues 193-220 (QSQS…QEQS), 230-255 (SESQ…SQRQ), 271-324 (KSNE…GLQQ), and 521-544 (QSQL…EQLQ). Disordered regions lie at residues 193 to 255 (QSQS…SQRQ), 271 to 349 (KSNE…QKQL), 518 to 544 (TQTQ…EQLQ), 638 to 671 (PSEG…SGGG), and 732 to 912 (GQQQ…NLSG). Low complexity-rich tracts occupy residues 732–757 (GQQQ…SSSQ) and 765–785 (QSTG…GLQT). Positions 803–818 (RLKEQEQLRIQTENDQ) are enriched in basic and acidic residues. The span at 821-845 (SSSSSHSNSQNSQSSSSQSSQASQS) shows a compositional bias: low complexity. Positions 851 to 861 (EAGNRNTLLLD) are enriched in polar residues. Over residues 862 to 897 (QSSSKTQSESKSESSSQSSSHSSSQSTSNSSSNVQS) the composition is skewed to low complexity. Residues 898–912 (KLQGESQALLNNLSG) show a composition bias toward polar residues.

Post-translationally, proteolytically cleaved by the seminal metalloprotease Semp1. Cleavage appears to take place in the mated female. As to expression, detected in the male accessory glands (at protein level). Produced in the accessory glands and secreted into seminal fluid.

Its subcellular location is the secreted. Responsible for physiological and behavioral changes in mated female flies. Associates with sperm and localizes to specific regions of the female reproductive tract, including the sperm storage organs. It accelerates sperm accumulation into storage but does not mediate the entry of the first sperm into storage. Once sperm storage has initiated it seems to act as a guidance factor helping subsequent sperm move into storage, a corral concentrating sperm around the SSO entrances and/or a trigger for responses within the female that accelerate storage of sperm. This is Accessory gland protein Acp36DE (Acp36DE) from Drosophila melanogaster (Fruit fly).